The primary structure comprises 194 residues: Peptidyl-tRNA hydrolase (194 aa).

Tyr-17 is a tRNA binding site. His-22 functions as the Proton acceptor in the catalytic mechanism. TRNA contacts are provided by Tyr-68, Asn-70, and Asn-116.

Belongs to the PTH family. In terms of assembly, monomer.

It localises to the cytoplasm. It catalyses the reaction an N-acyl-L-alpha-aminoacyl-tRNA + H2O = an N-acyl-L-amino acid + a tRNA + H(+). Hydrolyzes ribosome-free peptidyl-tRNAs (with 1 or more amino acids incorporated), which drop off the ribosome during protein synthesis, or as a result of ribosome stalling. In terms of biological role, catalyzes the release of premature peptidyl moieties from peptidyl-tRNA molecules trapped in stalled 50S ribosomal subunits, and thus maintains levels of free tRNAs and 50S ribosomes. This chain is Peptidyl-tRNA hydrolase, found in Pseudomonas syringae pv. syringae (strain B728a).